We begin with the raw amino-acid sequence, 90 residues long: MSTRKLNKVMVQPVNLIFRYLQNRTRVQIWLYEDVTHRLEGYIIGFDEFMNVVFDEAEEVNMKTKGRNKIGRILLKGDNITLIHAAQQEA.

The Sm domain maps to 14 to 89 (VNLIFRYLQN…ITLIHAAQQE (76 aa)).

Belongs to the snRNP Sm proteins family. As to quaternary structure, core component of the spliceosomal U1, U2, U4 and U5 small nuclear ribonucleoproteins (snRNPs), the building blocks of the spliceosome.

The protein resides in the nucleus. Its subcellular location is the cytoplasm. It localises to the cytosol. In terms of biological role, plays a role in pre-mRNA splicing as a core component of the spliceosomal U1, U2, U4 and U5 small nuclear ribonucleoproteins (snRNPs), the building blocks of the spliceosome. The sequence is that of Probable small nuclear ribonucleoprotein E (snr-6) from Caenorhabditis elegans.